The following is a 148-amino-acid chain: 3-dehydroquinate dehydratase (148 aa).

Asn-74, His-80, and Asp-87 together coordinate substrate. The Proton donor role is filled by His-100. Substrate-binding positions include 101–102 (LS) and Arg-111.

It belongs to the type-II 3-dehydroquinase family. In terms of assembly, homododecamer.

The catalysed reaction is 3-dehydroquinate = 3-dehydroshikimate + H2O. It functions in the pathway metabolic intermediate biosynthesis; chorismate biosynthesis; chorismate from D-erythrose 4-phosphate and phosphoenolpyruvate: step 3/7. This Bacillus subtilis (strain 168) protein is 3-dehydroquinate dehydratase (yqhS).